A 155-amino-acid chain; its full sequence is MKLQLCAVGRLRSGPERDLVEDYLARFERTGRPLGLPPVQLLELEDRKGGGMEAEADLIAKAVAPGAALVILDERGRTLSSPEFADHLAHWRDSGRDVALAIGGADGLAPRLRDRADLAMSLGRMVWPHMLVRVMLAEQLYRAATILAGSPYHRV.

Residues Leu72, Gly103, and 122–127 each bind S-adenosyl-L-methionine; that span reads LGRMVW.

Belongs to the RNA methyltransferase RlmH family. Homodimer.

It is found in the cytoplasm. It catalyses the reaction pseudouridine(1915) in 23S rRNA + S-adenosyl-L-methionine = N(3)-methylpseudouridine(1915) in 23S rRNA + S-adenosyl-L-homocysteine + H(+). In terms of biological role, specifically methylates the pseudouridine at position 1915 (m3Psi1915) in 23S rRNA. The chain is Ribosomal RNA large subunit methyltransferase H from Cereibacter sphaeroides (strain ATCC 17029 / ATH 2.4.9) (Rhodobacter sphaeroides).